The following is a 214-amino-acid chain: Ras-related protein RABH1c (214 aa).

16 to 23 (GDQSVGKT) contacts GTP. Positions 38–46 (YQPTIGIDF) match the Effector region motif. Residues 64–68 (DTAGQ), 123–126 (NKTD), and 153–154 (SA) contribute to the GTP site. The interval 194-214 (TSNSSQGEQQGGAGGGGGCSC) is disordered. Gly residues predominate over residues 202–214 (QQGGAGGGGGCSC). 2 S-geranylgeranyl cysteine lipidation sites follow: C212 and C214. C214 is modified (cysteine methyl ester).

Belongs to the small GTPase superfamily. Rab family. In terms of assembly, interacts with the C-terminus of GC5, but not with GC3.

It localises to the golgi apparatus membrane. The protein localises to the cytoplasm. The protein resides in the cytosol. Functionally, protein transport. Regulator of membrane traffic from the Golgi apparatus towards the endoplasmic reticulum (ER). The sequence is that of Ras-related protein RABH1c (RABH1C) from Arabidopsis thaliana (Mouse-ear cress).